We begin with the raw amino-acid sequence, 425 residues long: Amidase 1 (425 aa).

Ala2 is subject to N-acetylalanine. Catalysis depends on charge relay system residues Lys36 and Ser113. Ser137 serves as the catalytic Acyl-ester intermediate.

This sequence belongs to the amidase family. In terms of tissue distribution, expressed in cotyledons, leaves and flower buds. Lower levels in roots, stems and siliques.

It is found in the cytoplasm. The protein resides in the nucleus. Its subcellular location is the nucleoplasm. The catalysed reaction is a monocarboxylic acid amide + H2O = a monocarboxylate + NH4(+). It catalyses the reaction indole-3-acetamide + H2O = (indol-3-yl)acetate + NH4(+). The enzyme catalyses 2-phenylacetamide + H2O = 2-phenylacetate + NH4(+). It carries out the reaction L-asparagine + H2O = L-aspartate + NH4(+). The catalysed reaction is 1-naphthaleneacetamide + H2O = 1-naphthaleneacetate + NH4(+). Inhibited by phenylmethylsulfonyl fluoride (PMSF). Functionally, amidase involved in auxin biosynthesis. Converts indole-3-acetamide to indole-3-acetate. Converts phenyl-2-acetamide (PAM) to phenyl-2-acetate. Substrate preference is PAM &gt; IAM. Can also use L-asparagine and 1-naphtalene-acetamide as substrates, but not indole-3-acetonitrile or indole-3-acetyl-L-aspartic acid. This chain is Amidase 1, found in Arabidopsis thaliana (Mouse-ear cress).